The sequence spans 406 residues: NADH-quinone oxidoreductase subunit D (406 aa).

Belongs to the complex I 49 kDa subunit family. As to quaternary structure, NDH-1 is composed of 14 different subunits. Subunits NuoB, C, D, E, F, and G constitute the peripheral sector of the complex.

It localises to the cell inner membrane. The enzyme catalyses a quinone + NADH + 5 H(+)(in) = a quinol + NAD(+) + 4 H(+)(out). Functionally, NDH-1 shuttles electrons from NADH, via FMN and iron-sulfur (Fe-S) centers, to quinones in the respiratory chain. The immediate electron acceptor for the enzyme in this species is believed to be ubiquinone. Couples the redox reaction to proton translocation (for every two electrons transferred, four hydrogen ions are translocated across the cytoplasmic membrane), and thus conserves the redox energy in a proton gradient. This Acidiphilium cryptum (strain JF-5) protein is NADH-quinone oxidoreductase subunit D.